Here is a 572-residue protein sequence, read N- to C-terminus: Zyxin (572 aa).

A2 carries the N-acetylalanine modification. Positions 23-351 (QKKFGPVVAP…VRSPGAPGPL (329 aa)) are disordered. 2 stretches are compositionally biased toward pro residues: residues 63 to 78 (IPPP…PPPL) and 93 to 108 (FPPP…PPAP). Phosphoserine is present on residues S116, S142, S143, S169, and S170. Residues 143-156 (SIDLEIDSLSSLLD) are compositionally biased toward low complexity. The residue at position 179 (T179) is a Phosphothreonine. A compositionally biased stretch (low complexity) spans 202–239 (SPSSSQPLPQVPAPAQSQTQFHVQPQPQPKPQVQLHVQ). The segment covering 240–252 (SQTQPVSLANTQP) has biased composition (polar residues). At R253 the chain carries Asymmetric dimethylarginine. Over residues 253-265 (RGPPASSPAPAPK) the composition is skewed to pro residues. The residue at position 259 (S259) is a Phosphoserine. N6-acetyllysine is present on K265. S267 is modified (phosphoserine). The residue at position 270 (T270) is a Phosphothreonine. At K272 the chain carries N6-acetyllysine. A Phosphothreonine modification is found at T274. K279 carries the post-translational modification N6-acetyllysine. Residues S281, S288, and S308 each carry the phosphoserine modification. Polar residues predominate over residues 305–318 (GTGSPQPPSFTYAQ). Residues 319–330 (QREKPRVQEKQH) are compositionally biased toward basic and acidic residues. S344 carries the post-translational modification Phosphoserine. 3 consecutive LIM zinc-binding domains span residues 384 to 443 (CGRC…TLEK), 444 to 503 (CNTC…YAPR), and 504 to 570 (CSVC…TARA).

It belongs to the zyxin/ajuba family. As to quaternary structure, interacts with HPV type 6 protein E6. Does not interact significantly with E6 proteins from HPV types 11, 16, or 18. Interacts, via the Pro-rich regions, with the EVH1 domains of ENAH, EVL and VASP. Interacts with the first LIM domain of TES. Interacts with NEBL (isoform 2). Interacts with SYNPO2. (Microbial infection) Interacts with human papillomavirus type 6/HPV6 protein E6. Does not interact significantly with E6 proteins from HPV types 11, 16, or 18.

It is found in the cytoplasm. The protein resides in the cytoskeleton. Its subcellular location is the nucleus. It localises to the cell junction. The protein localises to the focal adhesion. Adhesion plaque protein. Binds alpha-actinin and the CRP protein. Important for targeting TES and ENA/VASP family members to focal adhesions and for the formation of actin-rich structures. May be a component of a signal transduction pathway that mediates adhesion-stimulated changes in gene expression. The protein is Zyxin (ZYX) of Homo sapiens (Human).